The sequence spans 238 residues: MEGGGGGADGQAQPVAQAPPAMQPMQQLSRYESQKRRDWNTFLQYLKNHRPPLTLARCSGAHVIEFLKYLDQFGKTKVHASGCAYYGQPSPPAPCPCPLRQAWGSLDALIGRLRAAYEESGHAPESNPFAARAVRIYLREVRDAQAKARGIPYEKKKRKRTQQQQPPPPPPPPPQHQPGAAAGEASSSSSAAAAAVAAEGSGSSAAAAAATSQTGGGGGGSTTTTTASAAAPTTATRV.

Disordered stretches follow at residues 1–33 and 147–238; these read MEGGGGGADGQAQPVAQAPPAMQPMQQLSRYES and KARG…ATRV. Positions 10 to 27 are enriched in low complexity; sequence GQAQPVAQAPPAMQPMQQ. In terms of domain architecture, ALOG spans 30–157; sequence RYESQKRRDW…ARGIPYEKKK (128 aa). Positions 155-159 match the Nuclear localization signal motif; that stretch reads KKKRK. The segment covering 165–176 has biased composition (pro residues); that stretch reads QPPPPPPPPPQH. Composition is skewed to low complexity over residues 177-213 and 222-238; these read QPGAAAGEASSSSSAAAAAVAAEGSGSSAAAAAATSQ and TTTTTASAAAPTTATRV.

This sequence belongs to the plant homeotic and developmental regulators ALOG protein family.

It localises to the nucleus. In terms of biological role, probable transcription regulator that acts as a developmental regulator by promoting cell growth in response to light. The chain is Protein G1-like8 (G1L8) from Oryza sativa subsp. japonica (Rice).